A 558-amino-acid chain; its full sequence is Potassium-transporting ATPase potassium-binding subunit (558 aa).

12 consecutive transmembrane segments (helical) span residues 1 to 21 (MEII…SGYL), 66 to 86 (FNGF…WLFL), 127 to 147 (MIVM…VCIA), 166 to 186 (IVRF…ILLM), 245 to 265 (IWSN…MLFL), 281 to 301 (ALIL…LTMW), 327 to 347 (FGAG…TGSV), 354 to 374 (LTPL…VFGG), 377 to 397 (VGLM…SLMV), 416 to 436 (IVLV…LAFM), 482 to 502 (ISTG…QLMI), and 531 to 551 (IVFI…LGPI).

This sequence belongs to the KdpA family. As to quaternary structure, the system is composed of three essential subunits: KdpA, KdpB and KdpC.

The protein resides in the cell membrane. In terms of biological role, part of the high-affinity ATP-driven potassium transport (or Kdp) system, which catalyzes the hydrolysis of ATP coupled with the electrogenic transport of potassium into the cytoplasm. This subunit binds the extracellular potassium ions and delivers the ions to the membrane domain of KdpB through an intramembrane tunnel. The chain is Potassium-transporting ATPase potassium-binding subunit from Staphylococcus aureus (strain MSSA476).